Here is a 332-residue protein sequence, read N- to C-terminus: Protein phosphatase PTC7 homolog fig (332 aa).

In terms of domain architecture, PPM-type phosphatase spans 70-325 (KPCSPRERAN…DDITLILASV (256 aa)). Mn(2+) is bound by residues Asp-102, Gly-103, and Asp-247.

This sequence belongs to the PP2C family. The cofactor is Mg(2+). Mn(2+) serves as cofactor.

It catalyses the reaction O-phospho-L-seryl-[protein] + H2O = L-seryl-[protein] + phosphate. The catalysed reaction is O-phospho-L-threonyl-[protein] + H2O = L-threonyl-[protein] + phosphate. This is Protein phosphatase PTC7 homolog fig from Drosophila ananassae (Fruit fly).